The sequence spans 531 residues: Na(+)/H(+) antiporter NhaB (531 aa).

11 helical membrane-spanning segments follow: residues isoleucine 23–tryptophan 45, proline 66–leucine 86, leucine 97–phenylalanine 117, valine 130–isoleucine 164, leucine 206–proline 226, leucine 244–valine 264, alanine 307–isoleucine 327, glutamate 352–isoleucine 372, leucine 393–glycine 413, alanine 451–isoleucine 471, and methionine 478–glutamate 498.

It belongs to the NhaB Na(+)/H(+) (TC 2.A.34) antiporter family.

It is found in the cell inner membrane. The catalysed reaction is 2 Na(+)(in) + 3 H(+)(out) = 2 Na(+)(out) + 3 H(+)(in). Functionally, na(+)/H(+) antiporter that extrudes sodium in exchange for external protons. The chain is Na(+)/H(+) antiporter NhaB from Shewanella loihica (strain ATCC BAA-1088 / PV-4).